A 344-amino-acid chain; its full sequence is Protein YRO2 (344 aa).

Residues 1-34 are Extracellular-facing; the sequence is MSDYVELLKRGGNEAIKINPPTGADFHITSRGSD. Residues 35 to 55 traverse the membrane as a helical segment; sequence WLFTVFCVNLLFGVILVPLMF. At 56 to 62 the chain is on the cytoplasmic side; sequence RKPVKDR. Residues 63–83 form a helical membrane-spanning segment; it reads FVYYTAIAPNLFMSIAYFTMA. Residues 84–119 are Extracellular-facing; it reads SNLGWIPVRAKYNHVQTSTQKEHPGYRQIFYARYVG. Residues 120 to 140 traverse the membrane as a helical segment; sequence WFLAFPWPIIQMSLLGGTPLW. A topological domain (cytoplasmic) is located at residue glutamine 141. A helical transmembrane segment spans residues 142–162; the sequence is IAFNVGMTEIFTVCWLIAACV. Topologically, residues 163–172 are extracellular; it reads HSTYKWGYYT. The chain crosses the membrane as a helical span at residues 173 to 193; that stretch reads IGIGAAIVVCISLMTTTFNLV. Topologically, residues 194–202 are cytoplasmic; it reads KARGKDVSN. A helical membrane pass occupies residues 203 to 223; that stretch reads VFITFMSVIMFLWLIAYPTCF. Over 224-238 the chain is Extracellular; sequence GITDGGNVLQPDSAT. A helical transmembrane segment spans residues 239-259; that stretch reads IFYGIIDLLILSILPVLFMPL. Over 260–344 the chain is Cytoplasmic; that stretch reads ANYLGIERLG…EEEDVATDSE (85 aa). The disordered stretch occupies residues 282–344; that stretch reads PVAEKKMPSP…EEEDVATDSE (63 aa). A Glycyl lysine isopeptide (Lys-Gly) (interchain with G-Cter in ubiquitin) cross-link involves residue lysine 286. At serine 293 the chain carries Phosphoserine. Residues 297–306 are compositionally biased toward basic and acidic residues; that stretch reads SDSDSSIKEK. Residues 307-330 are compositionally biased toward basic residues; the sequence is LKLKKKHKKDKKKAKKAKKAKKAK. Acidic residues predominate over residues 334-344; the sequence is EEEEDVATDSE. Threonine 341 is subject to Phosphothreonine. A Phosphoserine modification is found at serine 343.

The protein belongs to the archaeal/bacterial/fungal opsin family.

It is found in the membrane. The protein is Protein YRO2 (YRO2) of Saccharomyces cerevisiae (strain ATCC 204508 / S288c) (Baker's yeast).